We begin with the raw amino-acid sequence, 610 residues long: Elongation factor 4 (610 aa).

In terms of domain architecture, tr-type G spans 15–197 (KSIRNFSIIA…RIINDIPYPK (183 aa)). GTP contacts are provided by residues 27 to 32 (DHGKST) and 144 to 147 (NKID).

This sequence belongs to the TRAFAC class translation factor GTPase superfamily. Classic translation factor GTPase family. LepA subfamily.

The protein resides in the cell membrane. It catalyses the reaction GTP + H2O = GDP + phosphate + H(+). Its function is as follows. Required for accurate and efficient protein synthesis under certain stress conditions. May act as a fidelity factor of the translation reaction, by catalyzing a one-codon backward translocation of tRNAs on improperly translocated ribosomes. Back-translocation proceeds from a post-translocation (POST) complex to a pre-translocation (PRE) complex, thus giving elongation factor G a second chance to translocate the tRNAs correctly. Binds to ribosomes in a GTP-dependent manner. This Buchnera aphidicola subsp. Acyrthosiphon pisum (strain APS) (Acyrthosiphon pisum symbiotic bacterium) protein is Elongation factor 4.